The chain runs to 296 residues: MTAKRIDGKAFAAGVRARVAEEVARLKEGHGIVPGLAVVLVGEDPASQVYVGAKGKQTVEVGMASFEHRLPAGTSEAELLALIDRLNHDPAVHGILVQLPLPAHLNADLVINALDPAKDVDGFHISNVGRLGTGQKSMVPCTPLGCLMMLRDHLGALSGLNAVVVGRSNIVGKPMAQLLLGESCTVTIAHSRTRDLAAVCRGADILVAAVGRPEMITGDFVKPGATVIDVGINRIERDGKTKLVGDVDYASAAEVAGAITPVPGGVGPMTIACLLANTLTACCRANGLPEPQGLTA.

Residues 166 to 168 (GRS), Ser191, and Ile232 each bind NADP(+).

Belongs to the tetrahydrofolate dehydrogenase/cyclohydrolase family. Homodimer.

The enzyme catalyses (6R)-5,10-methylene-5,6,7,8-tetrahydrofolate + NADP(+) = (6R)-5,10-methenyltetrahydrofolate + NADPH. It catalyses the reaction (6R)-5,10-methenyltetrahydrofolate + H2O = (6R)-10-formyltetrahydrofolate + H(+). The protein operates within one-carbon metabolism; tetrahydrofolate interconversion. Its function is as follows. Catalyzes the oxidation of 5,10-methylenetetrahydrofolate to 5,10-methenyltetrahydrofolate and then the hydrolysis of 5,10-methenyltetrahydrofolate to 10-formyltetrahydrofolate. This chain is Bifunctional protein FolD, found in Cereibacter sphaeroides (strain ATCC 17023 / DSM 158 / JCM 6121 / CCUG 31486 / LMG 2827 / NBRC 12203 / NCIMB 8253 / ATH 2.4.1.) (Rhodobacter sphaeroides).